Here is a 481-residue protein sequence, read N- to C-terminus: Probable squalene synthase (481 aa).

The next 2 membrane-spanning stretches (helical) occupy residues 294-314 (SVFN…ELVF) and 416-436 (FLVL…IGAA).

It belongs to the phytoene/squalene synthase family. Requires Mg(2+) as cofactor.

It localises to the endoplasmic reticulum membrane. The catalysed reaction is 2 (2E,6E)-farnesyl diphosphate + NADPH + H(+) = squalene + 2 diphosphate + NADP(+). The enzyme catalyses 2 (2E,6E)-farnesyl diphosphate + NADH + H(+) = squalene + 2 diphosphate + NAD(+). Its pathway is terpene metabolism; lanosterol biosynthesis; lanosterol from farnesyl diphosphate: step 1/3. Functionally, catalyzes the condensation of 2 two farnesyl pyrophosphate moieties to form squalene. It is the first committed enzyme of the sterol biosynthesis pathway. Required for the biosynthesis of ergosterol. The protein is Probable squalene synthase (erg-6) of Neurospora crassa (strain ATCC 24698 / 74-OR23-1A / CBS 708.71 / DSM 1257 / FGSC 987).